A 158-amino-acid polypeptide reads, in one-letter code: MIGRMVGLEPSSRSGVLEECRECRAIVMKGDGVQTPLHKGDSILGGEGACLMRYAAWTLISAVDVVYCSLETRESVSLTFNPDGQVIVVPFMFKGYNIAALPTTKFGDLKKDTKQIENVVSFLRSDICYAVWEFLVSSVQYKDDDRFERLFDERMRGI.

It belongs to the UPF0329 family.

The protein is UPF0329 protein ECU06_0050 of Encephalitozoon cuniculi (strain GB-M1) (Microsporidian parasite).